The sequence spans 480 residues: Aspartyl/glutamyl-tRNA(Asn/Gln) amidotransferase subunit B (480 aa).

It belongs to the GatB/GatE family. GatB subfamily. Heterotrimer of A, B and C subunits.

The catalysed reaction is L-glutamyl-tRNA(Gln) + L-glutamine + ATP + H2O = L-glutaminyl-tRNA(Gln) + L-glutamate + ADP + phosphate + H(+). It carries out the reaction L-aspartyl-tRNA(Asn) + L-glutamine + ATP + H2O = L-asparaginyl-tRNA(Asn) + L-glutamate + ADP + phosphate + 2 H(+). Its function is as follows. Allows the formation of correctly charged Asn-tRNA(Asn) or Gln-tRNA(Gln) through the transamidation of misacylated Asp-tRNA(Asn) or Glu-tRNA(Gln) in organisms which lack either or both of asparaginyl-tRNA or glutaminyl-tRNA synthetases. The reaction takes place in the presence of glutamine and ATP through an activated phospho-Asp-tRNA(Asn) or phospho-Glu-tRNA(Gln). The chain is Aspartyl/glutamyl-tRNA(Asn/Gln) amidotransferase subunit B from Streptococcus pneumoniae (strain Hungary19A-6).